Consider the following 488-residue polypeptide: N-succinylglutamate 5-semialdehyde dehydrogenase (488 aa).

221–226 (GSSRTG) contacts NAD(+). Catalysis depends on residues glutamate 244 and cysteine 278.

It belongs to the aldehyde dehydrogenase family. AstD subfamily.

The enzyme catalyses N-succinyl-L-glutamate 5-semialdehyde + NAD(+) + H2O = N-succinyl-L-glutamate + NADH + 2 H(+). It participates in amino-acid degradation; L-arginine degradation via AST pathway; L-glutamate and succinate from L-arginine: step 4/5. Catalyzes the NAD-dependent reduction of succinylglutamate semialdehyde into succinylglutamate. The chain is N-succinylglutamate 5-semialdehyde dehydrogenase from Pseudomonas syringae pv. tomato (strain ATCC BAA-871 / DC3000).